The primary structure comprises 132 residues: Holo-[acyl-carrier-protein] synthase (132 aa).

Residues Asp8 and Glu57 each coordinate Mg(2+).

The protein belongs to the P-Pant transferase superfamily. AcpS family. The cofactor is Mg(2+).

The protein resides in the cytoplasm. The enzyme catalyses apo-[ACP] + CoA = holo-[ACP] + adenosine 3',5'-bisphosphate + H(+). Its function is as follows. Transfers the 4'-phosphopantetheine moiety from coenzyme A to a Ser of acyl-carrier-protein. The chain is Holo-[acyl-carrier-protein] synthase from Methylobacterium nodulans (strain LMG 21967 / CNCM I-2342 / ORS 2060).